The chain runs to 128 residues: Small ribosomal subunit protein uS12 (128 aa).

3-methylthioaspartic acid is present on Asp89. Positions 101–128 (SLDTSGVADRRQGRSKYGAKRPKGAAAK) are disordered. Positions 113-128 (GRSKYGAKRPKGAAAK) are enriched in basic residues.

Belongs to the universal ribosomal protein uS12 family. In terms of assembly, part of the 30S ribosomal subunit. Contacts proteins S8 and S17. May interact with IF1 in the 30S initiation complex.

With S4 and S5 plays an important role in translational accuracy. Its function is as follows. Interacts with and stabilizes bases of the 16S rRNA that are involved in tRNA selection in the A site and with the mRNA backbone. Located at the interface of the 30S and 50S subunits, it traverses the body of the 30S subunit contacting proteins on the other side and probably holding the rRNA structure together. The combined cluster of proteins S8, S12 and S17 appears to hold together the shoulder and platform of the 30S subunit. This chain is Small ribosomal subunit protein uS12, found in Prosthecochloris aestuarii (strain DSM 271 / SK 413).